The chain runs to 290 residues: tRNA (adenine(58)-N(1))-methyltransferase catalytic subunit TRMT61A (290 aa).

Position 2 is an N-acetylserine (Ser2). Substrate stretches follow at residues 20–22 (LGH), 35–42 (QTQTRHGV), 64–65 (GW), 85–89 (QILYS), and 110–117 (SGTGSGSV). Residues Leu87, 114–116 (SGS), Glu135, Arg140, 163–164 (DV), and Asp181 contribute to the S-adenosyl-L-methionine site. Substrate regions lie at residues 180–183 (LDIP) and 205–212 (SFSPCIEQ). Thr279 is a substrate binding site.

It belongs to the class I-like SAM-binding methyltransferase superfamily. TRM61 family. In terms of assembly, heterotetramer; composed of two copies of TRMT6 and two copies of TRMT61A.

Its subcellular location is the nucleus. It carries out the reaction adenosine(58) in tRNA + S-adenosyl-L-methionine = N(1)-methyladenosine(58) in tRNA + S-adenosyl-L-homocysteine + H(+). The catalysed reaction is an adenosine in mRNA + S-adenosyl-L-methionine = an N(1)-methyladenosine in mRNA + S-adenosyl-L-homocysteine + H(+). Functionally, catalytic subunit of tRNA (adenine-N(1)-)-methyltransferase, which catalyzes the formation of N(1)-methyladenine at position 58 (m1A58) in initiator methionyl-tRNA. Catalytic subunit of mRNA N(1)-methyltransferase complex, which mediates methylation of adenosine residues at the N(1) position of a small subset of mRNAs: N(1) methylation takes place in tRNA T-loop-like structures of mRNAs and is only present at low stoichiometries. This chain is tRNA (adenine(58)-N(1))-methyltransferase catalytic subunit TRMT61A (Trmt61a), found in Rattus norvegicus (Rat).